We begin with the raw amino-acid sequence, 304 residues long: Glutaminase (304 aa).

The substrate site is built by Ser63, Asn114, Glu158, Asn165, Tyr189, Tyr240, and Val258.

The protein belongs to the glutaminase family. In terms of assembly, homotetramer.

It carries out the reaction L-glutamine + H2O = L-glutamate + NH4(+). The polypeptide is Glutaminase (Shewanella amazonensis (strain ATCC BAA-1098 / SB2B)).